The chain runs to 662 residues: UvrABC system protein B (662 aa).

Residues 31–188 (DNIEGGEKAQ…NDLVDIQFER (158 aa)) enclose the Helicase ATP-binding domain. Residue 44 to 51 (GATGTGKT) coordinates ATP. Residues 97 to 120 (YYDYYQPEAYVPSSDTYIEKDSSV) carry the Beta-hairpin motif. The 167-residue stretch at 435-601 (QIDDLLGEIN…TIKKEIRDLI (167 aa)) folds into the Helicase C-terminal domain. The region spanning 626–661 (KELVKKLEKQMQEAVEVLDFELAAQIRDMMLEVKAL) is the UVR domain.

The protein belongs to the UvrB family. As to quaternary structure, forms a heterotetramer with UvrA during the search for lesions. Interacts with UvrC in an incision complex.

It localises to the cytoplasm. Functionally, the UvrABC repair system catalyzes the recognition and processing of DNA lesions. A damage recognition complex composed of 2 UvrA and 2 UvrB subunits scans DNA for abnormalities. Upon binding of the UvrA(2)B(2) complex to a putative damaged site, the DNA wraps around one UvrB monomer. DNA wrap is dependent on ATP binding by UvrB and probably causes local melting of the DNA helix, facilitating insertion of UvrB beta-hairpin between the DNA strands. Then UvrB probes one DNA strand for the presence of a lesion. If a lesion is found the UvrA subunits dissociate and the UvrB-DNA preincision complex is formed. This complex is subsequently bound by UvrC and the second UvrB is released. If no lesion is found, the DNA wraps around the other UvrB subunit that will check the other stand for damage. The sequence is that of UvrABC system protein B from Streptococcus pneumoniae (strain ATCC 700669 / Spain 23F-1).